Reading from the N-terminus, the 263-residue chain is 3-deoxy-manno-octulosonate cytidylyltransferase 2 (263 aa).

This sequence belongs to the KdsB family.

It localises to the cytoplasm. The catalysed reaction is 3-deoxy-alpha-D-manno-oct-2-ulosonate + CTP = CMP-3-deoxy-beta-D-manno-octulosonate + diphosphate. The protein operates within nucleotide-sugar biosynthesis; CMP-3-deoxy-D-manno-octulosonate biosynthesis; CMP-3-deoxy-D-manno-octulosonate from 3-deoxy-D-manno-octulosonate and CTP: step 1/1. Its pathway is bacterial outer membrane biogenesis; lipopolysaccharide biosynthesis. Activates KDO (a required 8-carbon sugar) for incorporation into bacterial lipopolysaccharide in Gram-negative bacteria. In Paraburkholderia phytofirmans (strain DSM 17436 / LMG 22146 / PsJN) (Burkholderia phytofirmans), this protein is 3-deoxy-manno-octulosonate cytidylyltransferase 2.